A 465-amino-acid polypeptide reads, in one-letter code: Cysteine--tRNA ligase (465 aa).

Cys27 is a Zn(2+) binding site. A 'HIGH' region motif is present at residues 29–39 (PTVYDDAHLGH). 3 residues coordinate Zn(2+): Cys207, His237, and Glu241. The 'KMSKS' region motif lies at 269 to 273 (KMSKS). Lys272 contacts ATP.

Belongs to the class-I aminoacyl-tRNA synthetase family. As to quaternary structure, monomer. It depends on Zn(2+) as a cofactor.

It is found in the cytoplasm. It carries out the reaction tRNA(Cys) + L-cysteine + ATP = L-cysteinyl-tRNA(Cys) + AMP + diphosphate. The polypeptide is Cysteine--tRNA ligase (cysS) (Helicobacter pylori (strain J99 / ATCC 700824) (Campylobacter pylori J99)).